Consider the following 119-residue polypeptide: Protein phosphatase EYA4 (119 aa).

This sequence belongs to the HAD-like hydrolase superfamily. EYA family. Requires Mg(2+) as cofactor.

The protein resides in the cytoplasm. Its subcellular location is the nucleus. The catalysed reaction is O-phospho-L-tyrosyl-[protein] + H2O = L-tyrosyl-[protein] + phosphate. Tyrosine phosphatase that specifically dephosphorylates 'Tyr-142' of histone H2AX (H2AXY142ph). 'Tyr-142' phosphorylation of histone H2AX plays a central role in DNA repair and acts as a mark that distinguishes between apoptotic and repair responses to genotoxic stress. Promotes efficient DNA repair by dephosphorylating H2AX, promoting the recruitment of DNA repair complexes containing MDC1. Its function as histone phosphatase probably explains its role in transcription regulation during organogenesis. May be involved in development of the eye. The chain is Protein phosphatase EYA4 (EYA4) from Gallus gallus (Chicken).